Here is a 302-residue protein sequence, read N- to C-terminus: Decaprenyl-phosphate phosphoribosyltransferase (302 aa).

Lys28 contributes to the 5-phospho-alpha-D-ribose 1-diphosphate binding site. 2 consecutive transmembrane segments (helical) span residues 30 to 50 and 55 to 75; these read VLVLAAPLAALGGGVRYDYVE and VSMAFVVFSLAASAVYLVNDV. A 5-phospho-alpha-D-ribose 1-diphosphate-binding site is contributed by Tyr70. The Mg(2+) site is built by Asn73 and Asp77. Lys87 contributes to the 5-phospho-alpha-D-ribose 1-diphosphate binding site. 2 helical membrane-spanning segments follow: residues 100 to 120 and 122 to 142; these read WLAYTVAVVLGVTSLAGAWML and PNLALVMVVYLAMQLAYCFGL. 2 residues coordinate 5-phospho-alpha-D-ribose 1-diphosphate: Lys143 and Arg160. 2 consecutive transmembrane segments (helical) span residues 146–166 and 170–190; these read AVVEICVVSSAYLIRAIAGGV and IPLSKWFLLIMAFGSLFMVAG. Lys191 is a trans,octa-cis-decaprenyl phosphate binding site. Helical transmembrane passes span 218 to 238, 244 to 264, and 282 to 302; these read LRFVWTLSATAVVLCYGLWAF, SGSWFAVSMIPFTIAILRYAV, and RVLQLLALAWIATVGAAVAFG.

Belongs to the UbiA prenyltransferase family. DPPR synthase subfamily. In terms of assembly, homotrimer. Mg(2+) serves as cofactor.

It is found in the cell inner membrane. The enzyme catalyses trans,octa-cis-decaprenyl phosphate + 5-phospho-alpha-D-ribose 1-diphosphate + H(+) = trans,octa-cis-decaprenylphospho-beta-D-ribofuranose 5-phosphate + diphosphate. The protein operates within cell wall biogenesis; cell wall polysaccharide biosynthesis. Functionally, involved in the biosynthesis of decaprenylphosphoryl arabinose (DPA) a precursor for arabinan synthesis in mycobacterial cell wall biosynthesis. Catalyzes the transfer of a 5-phosphoribosyl residue from phosphoribose diphosphate (PRPP) to decaprenyl phosphate (DP) to form decaprenylphosphoryl-5-phosphoribose (DPPR). This Mycobacterium tuberculosis (strain CDC 1551 / Oshkosh) protein is Decaprenyl-phosphate phosphoribosyltransferase.